Reading from the N-terminus, the 350-residue chain is Biotin synthase (350 aa).

The region spanning 38 to 265 (NHVQVSTLLS…MSAVRLSAGR (228 aa)) is the Radical SAM core domain. [4Fe-4S] cluster contacts are provided by cysteine 53, cysteine 57, and cysteine 60. Residues cysteine 97, cysteine 128, cysteine 188, and arginine 260 each coordinate [2Fe-2S] cluster.

This sequence belongs to the radical SAM superfamily. Biotin synthase family. As to quaternary structure, homodimer. The cofactor is [4Fe-4S] cluster. Requires [2Fe-2S] cluster as cofactor.

It catalyses the reaction (4R,5S)-dethiobiotin + (sulfur carrier)-SH + 2 reduced [2Fe-2S]-[ferredoxin] + 2 S-adenosyl-L-methionine = (sulfur carrier)-H + biotin + 2 5'-deoxyadenosine + 2 L-methionine + 2 oxidized [2Fe-2S]-[ferredoxin]. The protein operates within cofactor biosynthesis; biotin biosynthesis; biotin from 7,8-diaminononanoate: step 2/2. In terms of biological role, catalyzes the conversion of dethiobiotin (DTB) to biotin by the insertion of a sulfur atom into dethiobiotin via a radical-based mechanism. The sequence is that of Biotin synthase from Vibrio atlanticus (strain LGP32) (Vibrio splendidus (strain Mel32)).